A 64-amino-acid polypeptide reads, in one-letter code: DNA gyrase inhibitor YacG (64 aa).

Cys9, Cys12, Cys28, and Cys32 together coordinate Zn(2+). The disordered stretch occupies residues 45–64 (KRIPSSGDLSESDDWSEEQK). The segment covering 54-64 (SESDDWSEEQK) has biased composition (acidic residues).

The protein belongs to the DNA gyrase inhibitor YacG family. In terms of assembly, interacts with GyrB. Requires Zn(2+) as cofactor.

Functionally, inhibits all the catalytic activities of DNA gyrase by preventing its interaction with DNA. Acts by binding directly to the C-terminal domain of GyrB, which probably disrupts DNA binding by the gyrase. This chain is DNA gyrase inhibitor YacG, found in Citrobacter koseri (strain ATCC BAA-895 / CDC 4225-83 / SGSC4696).